The primary structure comprises 556 residues: Urocanate hydratase (556 aa).

NAD(+) contacts are provided by residues 52–53, Gln130, 176–178, Glu196, Arg201, 242–243, 263–267, 273–274, and Tyr322; these read GG, GMG, NA, QTSAH, and YL. Cys410 is a catalytic residue. Position 492 (Gly492) interacts with NAD(+).

Belongs to the urocanase family. Requires NAD(+) as cofactor.

It localises to the cytoplasm. It carries out the reaction 4-imidazolone-5-propanoate = trans-urocanate + H2O. Its pathway is amino-acid degradation; L-histidine degradation into L-glutamate; N-formimidoyl-L-glutamate from L-histidine: step 2/3. Functionally, catalyzes the conversion of urocanate to 4-imidazolone-5-propionate. The chain is Urocanate hydratase from Bradyrhizobium sp. (strain ORS 278).